We begin with the raw amino-acid sequence, 506 residues long: Sodium-coupled neutral amino acid symporter 2 (506 aa).

The interval 1–23 (MKKAEMGRFSISPDEDSSSYSSN) is disordered. Topologically, residues 1–76 (MKKAEMGRFS…HPGTTSFGMS (76 aa)) are cytoplasmic. The tract at residues 1 to 96 (MKKAEMGRFS…SGILGLSYAM (96 aa)) is regulates protein turnover upon amino acid deprivation. Residues Ser-10, Ser-12, Ser-21, Ser-22, and Ser-55 each carry the phosphoserine modification. A helical transmembrane segment spans residues 77 to 96 (VFNLSNAIVGSGILGLSYAM). Asn-82 serves as a coordination point for Na(+). Over 97–102 (ANTGIA) the chain is Extracellular. The helical transmembrane segment at 103 to 123 (LFIILLTFVSIFSLYSVHLLL) threads the bilayer. The Cytoplasmic segment spans residues 124–158 (KTANEGGSLLYEQLGYKAFGLVGKLAASGSITMQN). The helical transmembrane segment at 159 to 177 (IGAMSSYLFIVKYELPLVI) threads the bilayer. Topologically, residues 178–188 (QALTNIEDKTG) are extracellular. The helical transmembrane segment at 189-209 (LWYLNGNYLVLLVSLVVILPL) threads the bilayer. The Cytoplasmic segment spans residues 210 to 217 (SLFRNLGY). A helical transmembrane segment spans residues 218–238 (LGYTSGLSLLCMVFFLIVVIC). At 239–292 (KKFQVPCPVEAALIINETINTTLTQPTALVPALSHNVTENDSCRPHYFIFNSQT) the chain is on the extracellular side. Cys-245 and Cys-281 are oxidised to a cystine. N-linked (GlcNAc...) asparagine glycans are attached at residues Asn-258 and Asn-274. A helical membrane pass occupies residues 293 to 313 (VYAVPILIFSFVCHPAVLPIY). Over 314-329 (EELKDRSRRRMMNVSK) the chain is Cytoplasmic. Residues 330-350 (ISFFAMFLMYLLAALFGYLTF) form a helical membrane-spanning segment. Over 351-371 (YEHVESELLHTYSSILGTDIL) the chain is Extracellular. The chain crosses the membrane as a helical span at residues 372 to 392 (LLIVRLAVLMAVTLTVPVVIF). Thr-386 lines the Na(+) pocket. Residues 393–413 (PIRSSVTHLLCASKDFSWWRH) lie on the Cytoplasmic side of the membrane. A helical membrane pass occupies residues 414 to 434 (SLITVSILAFTNLLVIFVPTI). Residues 435–436 (RD) are Extracellular-facing. The chain crosses the membrane as a helical span at residues 437 to 457 (IFGFIGASAASMLIFILPSAF). Topologically, residues 458–472 (YIKLVKKEPMKSVQK) are cytoplasmic. The helical transmembrane segment at 473–495 (IGALFFLLSGVLVMTGSMALIVL) threads the bilayer. Topologically, residues 496–506 (DWVHNAPGGGH) are extracellular.

This sequence belongs to the amino acid/polyamine transporter 2 family. In terms of processing, polyubiquitination by NEDD4L regulates the degradation and the activity of SLC38A2. Ubiquitously expressed. Expressed in neocortex. Widely expressed in the central nervous system with higher concentrations in caudal regions. Expressed by glutamatergic and GABAergic neurons together with astrocytes and other non-neuronal cells in the cerebral cortex (at protein level).

It localises to the cell membrane. The enzyme catalyses L-alanine(in) + Na(+)(in) = L-alanine(out) + Na(+)(out). It carries out the reaction glycine(in) + Na(+)(in) = glycine(out) + Na(+)(out). It catalyses the reaction L-serine(in) + Na(+)(in) = L-serine(out) + Na(+)(out). The catalysed reaction is L-proline(in) + Na(+)(in) = L-proline(out) + Na(+)(out). The enzyme catalyses L-methionine(in) + Na(+)(in) = L-methionine(out) + Na(+)(out). It carries out the reaction L-histidine(in) + Na(+)(in) = L-histidine(out) + Na(+)(out). It catalyses the reaction L-asparagine(in) + Na(+)(in) = L-asparagine(out) + Na(+)(out). The catalysed reaction is L-glutamine(in) + Na(+)(in) = L-glutamine(out) + Na(+)(out). The enzyme catalyses L-threonine(in) + Na(+)(in) = L-threonine(out) + Na(+)(out). It carries out the reaction L-leucine(in) + Na(+)(in) = L-leucine(out) + Na(+)(out). It catalyses the reaction L-phenylalanine(in) + Na(+)(in) = L-phenylalanine(out) + Na(+)(out). With respect to regulation, inhibited by N-methyl-D-glucamine. Inhibited by choline. Allosteric regulation of sodium ions binding by pH. Functionally, symporter that cotransports neutral amino acids and sodium ions from the extracellular to the intracellular side of the cell membrane. The transport is pH-sensitive, Li(+)-intolerant, electrogenic, driven by the Na(+) electrochemical gradient and cotransports of neutral amino acids and sodium ions with a stoichiometry of 1:1. May function in the transport of amino acids at the blood-brain barrier. May function in the transport of amino acids in the supply of maternal nutrients to the fetus through the placenta. Maintains a key metabolic glutamine/glutamate balance underpinning retrograde signaling by dendritic release of the neurotransmitter glutamate. Transports L-proline in differentiating osteoblasts for the efficient synthesis of proline-enriched proteins and provides proline essential for osteoblast differentiation and bone formation during bone development. The protein is Sodium-coupled neutral amino acid symporter 2 of Homo sapiens (Human).